The primary structure comprises 805 residues: Transitional endoplasmic reticulum ATPase (805 aa).

S3 carries the phosphoserine modification. Residues P247–L253, N348, H384, and G521–L526 contribute to the ATP site. The tract at residues F768–G805 is disordered. The segment covering G776–G793 has biased composition (gly residues).

It belongs to the AAA ATPase family. As to quaternary structure, homohexamer. Forms a ring-shaped particle of 12.5 nm diameter, that displays 6-fold radial symmetry. Interacts with the FACT/DUF complex, which includes subunits ssrp1/duf87 and supt16h/duf140. Post-translationally, phosphorylated.

It localises to the cytoplasm. Its subcellular location is the cytosol. The protein resides in the endoplasmic reticulum. It is found in the nucleus. The protein localises to the stress granule. The catalysed reaction is ATP + H2O = ADP + phosphate + H(+). ATPase activity is inhibited or reduced by lowering pH from 9.0 to 7.0, and by addition of Ca(2+), EDTA, KNO(3) or by treatment with N-ethylmaleimide (NEM). Functionally, necessary for the fragmentation of Golgi stacks during mitosis and for their reassembly after mitosis. Involved in the formation of the nuclear envelope, and of the transitional endoplasmic reticulum (tER). The transfer of membranes from the endoplasmic reticulum to the Golgi apparatus occurs via 50-70 nm transition vesicles which derive from part-rough, part-smooth transitional elements of the endoplasmic reticulum (tER). Vesicle budding from the tER is an ATP-dependent process. Involved in endoplasmic reticulum stress-induced pre-emptive quality control, a mechanism that selectively attenuates the translocation of newly synthesized proteins into the endoplasmic reticulum and reroutes them to the cytosol for proteasomal degradation. Involved in clearance process by mediating G3BP1 extraction from stress granules. Also involved in DNA damage response: recruited to double-strand breaks (DSBs) sites and promotes the recruitment of tp53bp1 at DNA damage sites. Together with sprtn metalloprotease, involved in the repair of covalent DNA-protein cross-links (DPCs) during DNA synthesis. Involved in interstrand cross-link repair in response to replication stress by mediating unloading of the ubiquitinated CMG helicase complex. Enhances cell cycle progression and inhibits apoptosis at low temperatures. Essential for the maturation of ubiquitin-containing autophagosomes and the clearance of ubiquitinated protein by autophagy. Acts as a negative regulator of type I interferon production by promoting ubiquitination of rigi. May play a role in the ubiquitin-dependent sorting of membrane proteins to lysosomes where they undergo degradation. May more particularly play a role in caveolins sorting in cells. By controlling the steady-state expression of the IGF1R receptor, indirectly regulates the insulin-like growth factor receptor signaling pathway. The chain is Transitional endoplasmic reticulum ATPase from Xenopus tropicalis (Western clawed frog).